We begin with the raw amino-acid sequence, 399 residues long: MAAKAAALSSSPFVSSRRLSSPAASLRARTPRCVMGSEQVRVVVEEEGKTKKRMGVAEPRSAPPAVWTPRAPAQEARLAALRTDGRDSRLKIFSGTANRPLAQEIASYLGVDLGKVLIKRFADGEIYVQLQESVRGCDVFLVQPTCSPVNENLMELFVMIDACRRASARSITVVIPYFGYARADRKAQGREAITAKLSANLLTEAGSDRVIVCDIHSTQALGYFDIPVDHIHGQPVILDYLASKTISKDLVVVSPDVGGVVRARAFAKKLSDAPLAIVDKRRQGHNMSEVMHLIGDVKGKVAIMVDDMIDTAGTITSAAALLKQEGAEAVYACSTHAVFSPPAIERLSGGIFEEVIVTNSILLPEHKCFPQLTVLSMANLVAETIWHVHRDGSVSSIFQ.

Residues 1-32 constitute a chloroplast transit peptide; it reads MAAKAAALSSSPFVSSRRLSSPAASLRARTPR. Residues D214, H216, D225, and D229 each coordinate Mg(2+). Residues 299–314 form a binding of phosphoribosylpyrophosphate region; it reads GKVAIMVDDMIDTAGT.

Belongs to the ribose-phosphate pyrophosphokinase family. Requires Mg(2+) as cofactor.

The protein localises to the plastid. Its subcellular location is the chloroplast. The enzyme catalyses D-ribose 5-phosphate + ATP = 5-phospho-alpha-D-ribose 1-diphosphate + AMP + H(+). The protein is Ribose-phosphate pyrophosphokinase 2, chloroplastic of Oryza sativa subsp. japonica (Rice).